A 157-amino-acid chain; its full sequence is Phosphopantetheine adenylyltransferase (157 aa).

S9 contributes to the substrate binding site. ATP is bound by residues 9–10 (SF) and H17. 3 residues coordinate substrate: K41, L73, and K87. Residues 88 to 90 (GLR), E98, and 123 to 129 (YSYLSSS) contribute to the ATP site.

It belongs to the bacterial CoaD family. As to quaternary structure, homohexamer. Mg(2+) serves as cofactor.

The protein resides in the cytoplasm. The enzyme catalyses (R)-4'-phosphopantetheine + ATP + H(+) = 3'-dephospho-CoA + diphosphate. The protein operates within cofactor biosynthesis; coenzyme A biosynthesis; CoA from (R)-pantothenate: step 4/5. Functionally, reversibly transfers an adenylyl group from ATP to 4'-phosphopantetheine, yielding dephospho-CoA (dPCoA) and pyrophosphate. In Alkaliphilus metalliredigens (strain QYMF), this protein is Phosphopantetheine adenylyltransferase.